The following is a 205-amino-acid chain: Recombination protein RecR (205 aa).

A C4-type zinc finger spans residues 58 to 75; the sequence is CSVCQNVTDRDADPCYIC. The region spanning 83 to 182 is the Toprim domain; that stretch reads SVICVVESPA…SVTKIARGIP (100 aa).

The protein belongs to the RecR family.

Its function is as follows. May play a role in DNA repair. It seems to be involved in an RecBC-independent recombinational process of DNA repair. It may act with RecF and RecO. This is Recombination protein RecR from Chlorobium limicola (strain DSM 245 / NBRC 103803 / 6330).